Reading from the N-terminus, the 90-residue chain is Beta-microseminoprotein (90 aa).

Intrachain disulfides connect C2–C16, C34–C70, C37–C46, C39–C47, and C61–C84. The residue at position 90 (V90) is a Valine amide.

Belongs to the beta-microseminoprotein family.

Its subcellular location is the secreted. The protein is Beta-microseminoprotein (MSMB) of Struthio camelus (Common ostrich).